Reading from the N-terminus, the 111-residue chain is NADH-ubiquinone oxidoreductase chain 4 (111 aa).

The helical transmembrane segment at 35-55 threads the bilayer; that stretch reads LITSLFSWLDITVFLTGLSAF.

It belongs to the complex I subunit 4 family.

It is found in the mitochondrion membrane. It catalyses the reaction a ubiquinone + NADH + 5 H(+)(in) = a ubiquinol + NAD(+) + 4 H(+)(out). Core subunit of the mitochondrial membrane respiratory chain NADH dehydrogenase (Complex I) that is believed to belong to the minimal assembly required for catalysis. Complex I functions in the transfer of electrons from NADH to the respiratory chain. The immediate electron acceptor for the enzyme is believed to be ubiquinone. The protein is NADH-ubiquinone oxidoreductase chain 4 (MT-ND4) of Caiman crocodilus (Spectacled caiman).